We begin with the raw amino-acid sequence, 308 residues long: Mycothiol acetyltransferase (308 aa).

A disordered region spans residues 1-20 (MTSDDTAQPSGARRIETRPD). 2 consecutive N-acetyltransferase domains span residues 15 to 152 (IETR…RSLT) and 165 to 308 (VTVR…RSET). A 1D-myo-inositol 2-(L-cysteinylamino)-2-deoxy-alpha-D-glucopyranoside-binding site is contributed by E47. Residue 91-93 (LVV) participates in acetyl-CoA binding. 1D-myo-inositol 2-(L-cysteinylamino)-2-deoxy-alpha-D-glucopyranoside contacts are provided by E192, K231, and E240. Acetyl-CoA is bound by residues 244–246 (VGV) and 251–257 (QGGGLGK). Y278 contributes to the 1D-myo-inositol 2-(L-cysteinylamino)-2-deoxy-alpha-D-glucopyranoside binding site.

It belongs to the acetyltransferase family. MshD subfamily. As to quaternary structure, monomer.

It catalyses the reaction 1D-myo-inositol 2-(L-cysteinylamino)-2-deoxy-alpha-D-glucopyranoside + acetyl-CoA = mycothiol + CoA + H(+). Functionally, catalyzes the transfer of acetyl from acetyl-CoA to desacetylmycothiol (Cys-GlcN-Ins) to form mycothiol. In Streptomyces scabiei (strain 87.22), this protein is Mycothiol acetyltransferase.